The chain runs to 400 residues: NADH-quinone oxidoreductase subunit D (400 aa).

This sequence belongs to the complex I 49 kDa subunit family. As to quaternary structure, NDH-1 is composed of 14 different subunits. Subunits NuoB, C, D, E, F, and G constitute the peripheral sector of the complex.

It localises to the cell inner membrane. It carries out the reaction a quinone + NADH + 5 H(+)(in) = a quinol + NAD(+) + 4 H(+)(out). Functionally, NDH-1 shuttles electrons from NADH, via FMN and iron-sulfur (Fe-S) centers, to quinones in the respiratory chain. The immediate electron acceptor for the enzyme in this species is believed to be a menaquinone. Couples the redox reaction to proton translocation (for every two electrons transferred, four hydrogen ions are translocated across the cytoplasmic membrane), and thus conserves the redox energy in a proton gradient. This Pelodictyon phaeoclathratiforme (strain DSM 5477 / BU-1) protein is NADH-quinone oxidoreductase subunit D.